The chain runs to 353 residues: MDGFRIYPSDNYTEDDLGSGDYDSMKEPCFREENAHFNRIFLPTVYSIIFLTGIVGNGLVILVMGYQKKLRSMTDKYRLHLSVADLLFVLTLPFWAVDAVANWYFGKFLCKAVHVIYTVNLYSSVLILAFISLDRYLAIVHATNSQRPRKLLAEKVVYVGVWIPALLLTIPDFIFANVREADGRYICDRFYPSDSWLVVFQFQHIMVGLILPGIVILSCYCIIISKLSHSKGYQKRKALKTTVILILAFFACWLPYYIGISIDSFILLEIIKQGCEFESTVHKWISITEALAFFHCCLNPILYAFLGAKFKTSAQHALTSVSRGSSLKILSKGKRGGHSSVSTESESSSFHSS.

Residues 1–22 (MDGFRIYPSDNYTEDDLGSGDY) are important for chemokine binding and signaling. Residues 1–39 (MDGFRIYPSDNYTEDDLGSGDYDSMKEPCFREENAHFNR) are Extracellular-facing. Residue Tyr-7 is modified to Sulfotyrosine. The N-linked (GlcNAc...) asparagine glycan is linked to Asn-11. Tyr-12 carries the sulfotyrosine modification. An O-linked (Xyl...) (chondroitin sulfate) serine glycan is attached at Ser-19. Tyr-22 carries the post-translational modification Sulfotyrosine. 2 disulfides stabilise this stretch: Cys-29–Cys-275 and Cys-110–Cys-187. The helical transmembrane segment at 40–64 (IFLPTVYSIIFLTGIVGNGLVILVM) threads the bilayer. Residues 65–78 (GYQKKLRSMTDKYR) are Cytoplasmic-facing. The helical transmembrane segment at 79–100 (LHLSVADLLFVLTLPFWAVDAV) threads the bilayer. A chemokine binding region spans residues 95–98 (WAVD). Over 101–111 (ANWYFGKFLCK) the chain is Extracellular. A helical transmembrane segment spans residues 112–131 (AVHVIYTVNLYSSVLILAFI). The chemokine binding stretch occupies residues 114 to 118 (HVIYT). The Cytoplasmic portion of the chain corresponds to 132–155 (SLDRYLAIVHATNSQRPRKLLAEK). The short motif at 134–136 (DRY) is the Important for signaling element. The segment at 136–148 (YLAIVHATNSQRP) is involved in dimerization; when bound to chemokine. A helical transmembrane segment spans residues 156 to 175 (VVYVGVWIPALLLTIPDFIF). The Extracellular portion of the chain corresponds to 176–196 (ANVREADGRYICDRFYPSDSW). Residues 187–191 (CDRFY) are chemokine binding, important for signaling. The tract at residues 192–211 (PSDSWLVVFQFQHIMVGLIL) is involved in dimerization. A helical transmembrane segment spans residues 197-217 (LVVFQFQHIMVGLILPGIVIL). At 218–242 (SCYCIIISKLSHSKGYQKRKALKTT) the chain is on the cytoplasmic side. A helical membrane pass occupies residues 243–262 (VILILAFFACWLPYYIGISI). Topologically, residues 263–283 (DSFILLEIIKQGCEFESTVHK) are extracellular. The interval 267–269 (LLE) is involved in dimerization. The chain crosses the membrane as a helical span at residues 284–303 (WISITEALAFFHCCLNPILY). The Cytoplasmic segment spans residues 304 to 353 (AFLGAKFKTSAQHALTSVSRGSSLKILSKGKRGGHSSVSTESESSSFHSS). Phosphoserine is present on residues Ser-320 and Ser-322. 2 positions are modified to phosphoserine; by PKC and GRK6: Ser-325 and Ser-326. Positions 330–353 (LSKGKRGGHSSVSTESESSSFHSS) are disordered. Ser-331 is subject to Phosphoserine; by GRK6. Lys-332 is covalently cross-linked (Glycyl lysine isopeptide (Lys-Gly) (interchain with G-Cter in ubiquitin)). Residues 338–353 (HSSVSTESESSSFHSS) are compositionally biased toward low complexity. Phosphoserine; by GRK6 is present on Ser-340. Phosphoserine occurs at positions 349 and 352.

It belongs to the G-protein coupled receptor 1 family. As to quaternary structure, monomer. Can form homodimers. Interacts with CD164. Interacts with ARRB2; the interaction is dependent on the C-terminal phosphorylation of CXCR4 and allows activation of MAPK1 and MAPK3. Interacts with ARR3; the interaction is dependent on the C-terminal phosphorylation of CXCR4 and modulates calcium mobilization. Interacts with RNF113A; the interaction, enhanced by CXCL12, promotes CXCR4 ubiquitination and subsequent degradation. Interacts (via the cytoplasmic C-terminal) with ITCH (via the WW domains I and II); the interaction, enhanced by CXCL12, promotes CXCR4 ubiquitination and leads to its degradation. Interacts with extracellular ubiquitin. Interacts with DBN1; this interaction is enhanced by antigenic stimulation. Following LPS binding, may form a complex with GDF5, HSP90AA1 and HSPA8. In terms of processing, phosphorylated on agonist stimulation. Rapidly phosphorylated on serine and threonine residues in the C-terminal. Phosphorylation at Ser-325 and Ser-326 leads to recruitment of ITCH, ubiquitination and protein degradation. Ubiquitinated after ligand binding, leading to its degradation. Ubiquitinated by ITCH at the cell membrane on agonist stimulation. The ubiquitin-dependent mechanism, endosomal sorting complex required for transport (ESCRT), then targets CXCR4 for lysosomal degradation. This process is dependent also on prior Ser-/Thr-phosphorylation in the C-terminal of CXCR4. Also binding of ARRB1 to STAM negatively regulates CXCR4 sorting to lysosomes though modulating ubiquitination of SFR5S. Post-translationally, sulfation is required for efficient binding of CXCL12/SDF-1alpha and promotes its dimerization. In terms of processing, O- and N-glycosylated. N-glycosylation can mask coreceptor function. The O-glycosylation chondroitin sulfate attachment does not affect interaction with CXCL12/SDF-1alpha nor its coreceptor activity.

It localises to the cell membrane. Its subcellular location is the cell junction. The protein localises to the early endosome. It is found in the late endosome. The protein resides in the lysosome. Its function is as follows. Receptor for the C-X-C chemokine CXCL12/SDF-1 that transduces a signal by increasing intracellular calcium ion levels and enhancing MAPK1/MAPK3 activation. Involved in the AKT signaling cascade. Plays a role in regulation of cell migration, e.g. during wound healing. Acts as a receptor for extracellular ubiquitin; leading to enhanced intracellular calcium ions and reduced cellular cAMP levels. Binds bacterial lipopolysaccharide (LPS) et mediates LPS-induced inflammatory response, including TNF secretion by monocytes. Involved in hematopoiesis and in cardiac ventricular septum formation. Also plays an essential role in vascularization of the gastrointestinal tract, probably by regulating vascular branching and/or remodeling processes in endothelial cells. Involved in cerebellar development. In the CNS, could mediate hippocampal-neuron survival. This is C-X-C chemokine receptor type 4 (CXCR4) from Felis catus (Cat).